A 424-amino-acid polypeptide reads, in one-letter code: Adenylosuccinate synthetase (424 aa).

Residues 12-18 and 40-42 each bind GTP; these read GDEGKGK and GHT. Asp-13 (proton acceptor) is an active-site residue. Positions 13 and 40 each coordinate Mg(2+). Residues 13 to 16, 38 to 41, Thr-128, Arg-142, Gln-223, Thr-238, and Arg-302 contribute to the IMP site; these read DEGK and NAGH. The active-site Proton donor is the His-41. 298-304 is a binding site for substrate; sequence TTTGRPR. GTP-binding positions include Arg-304, 330–332, and 412–414; these read HVD and GVG.

Belongs to the adenylosuccinate synthetase family. As to quaternary structure, homodimer. Mg(2+) is required as a cofactor.

The protein resides in the cytoplasm. The catalysed reaction is IMP + L-aspartate + GTP = N(6)-(1,2-dicarboxyethyl)-AMP + GDP + phosphate + 2 H(+). It functions in the pathway purine metabolism; AMP biosynthesis via de novo pathway; AMP from IMP: step 1/2. Its function is as follows. Plays an important role in the de novo pathway of purine nucleotide biosynthesis. Catalyzes the first committed step in the biosynthesis of AMP from IMP. The polypeptide is Adenylosuccinate synthetase (Acetivibrio thermocellus (strain ATCC 27405 / DSM 1237 / JCM 9322 / NBRC 103400 / NCIMB 10682 / NRRL B-4536 / VPI 7372) (Clostridium thermocellum)).